The sequence spans 210 residues: ATP-dependent Clp protease proteolytic subunit (210 aa).

S114 acts as the Nucleophile in catalysis. The active site involves H139.

The protein belongs to the peptidase S14 family. In terms of assembly, fourteen ClpP subunits assemble into 2 heptameric rings which stack back to back to give a disk-like structure with a central cavity, resembling the structure of eukaryotic proteasomes.

Its subcellular location is the cytoplasm. The enzyme catalyses Hydrolysis of proteins to small peptides in the presence of ATP and magnesium. alpha-casein is the usual test substrate. In the absence of ATP, only oligopeptides shorter than five residues are hydrolyzed (such as succinyl-Leu-Tyr-|-NHMec, and Leu-Tyr-Leu-|-Tyr-Trp, in which cleavage of the -Tyr-|-Leu- and -Tyr-|-Trp bonds also occurs).. Its function is as follows. Cleaves peptides in various proteins in a process that requires ATP hydrolysis. Has a chymotrypsin-like activity. Plays a major role in the degradation of misfolded proteins. This is ATP-dependent Clp protease proteolytic subunit from Janthinobacterium sp. (strain Marseille) (Minibacterium massiliensis).